The sequence spans 536 residues: Lariat debranching enzyme (536 aa).

A divalent metal cation is bound by residues Cys8, His10, Asp39, and Asn84. Residues 124-154 (SGIFKSHDYRKGHFECPPYNQQTIRSAYHVR) are lariat recognition loop. The a divalent metal cation site is built by His174, His226, and His228. Residues 388 to 536 (EEGSVRGEYE…YAAEDEDEAK (149 aa)) form a disordered region. Positions 414–426 (EYNTDNSGLSSIN) are enriched in polar residues. A compositionally biased stretch (acidic residues) spans 430 to 441 (IMLDDEGGDEDL). Over residues 484–504 (ELEKSGVNKQVEEKSLNERPL) the composition is skewed to basic and acidic residues.

Belongs to the lariat debranching enzyme family. It depends on Fe(2+) as a cofactor. Zn(2+) is required as a cofactor. The cofactor is Mn(2+).

It localises to the nucleus. Active in presence of diverse metals including Fe(2+), Zn(2+), Mn(2+). Also activated by Ca(2+). Binds two metal cations in two adjacent alpha and beta metal-binding pockets. Functionally, cleaves the 2'-5' phosphodiester linkage at the branch point of excised lariat intron RNA and converts them into linear molecules that can be subsequently degraded, thereby facilitating ribonucleotide turnover. Linked to its role in pre-mRNA processing mechanism, may also participate in retrovirus replication and have an antiviral cell-intrinsic defense function. The chain is Lariat debranching enzyme (DBR1) from Gallus gallus (Chicken).